We begin with the raw amino-acid sequence, 380 residues long: Geranylgeranyl pyrophosphate synthase cle6 (380 aa).

Residues 1-19 (MHSVRTSTTSTSSMVSSTM) show a composition bias toward low complexity. Residues 1–55 (MHSVRTSTTSTSSMVSSTMHPFDAFNAPQPYQQHHPPRWNIHNPHFSQTNGHSIQ) form a disordered region. Over residues 45 to 55 (HFSQTNGHSIQ) the composition is skewed to polar residues. Isopentenyl diphosphate is bound by residues Lys102, Arg105, and His134. The Mg(2+) site is built by Asp141 and Asp145. Arg150 lines the dimethylallyl diphosphate pocket. Residue Arg151 participates in isopentenyl diphosphate binding. Positions 229, 230, and 263 each coordinate dimethylallyl diphosphate. Asp266 is a Mg(2+) binding site. Residues Asn270, Lys280, and Lys290 each contribute to the dimethylallyl diphosphate site.

The protein belongs to the FPP/GGPP synthase family. It depends on Mg(2+) as a cofactor.

It carries out the reaction isopentenyl diphosphate + dimethylallyl diphosphate = (2E)-geranyl diphosphate + diphosphate. It catalyses the reaction isopentenyl diphosphate + (2E)-geranyl diphosphate = (2E,6E)-farnesyl diphosphate + diphosphate. The enzyme catalyses isopentenyl diphosphate + (2E,6E)-farnesyl diphosphate = (2E,6E,10E)-geranylgeranyl diphosphate + diphosphate. It functions in the pathway secondary metabolite biosynthesis; terpenoid biosynthesis. Functionally, geranylgeranyl pyrophosphate synthase; part of the cluster A that mediates the biosynthesis of chevalone E and its oxidized derivatives that possess a unique five-membered lactone ring and can synergistically enhance the cytotoxicity of doxorubicin (DOX) in breast cancer cells. Within the pathway, cle6 takes part to the biosynthesis of the molecular scaffold by providing geranylgeranyl pyrophosphate (GGPP) to the prenyltransferase cle5 for C-3 geranylgeranylation of triacetic acid lactone. The molecular scaffold is commonly biosynthesized by a series of enzymes including the non-reducing polyketide synthase (NR-PKS) cle1 that produces the alpha-pyrone triacetic acid lactone (TAL); The membrane-bound prenyltransferase cle5 that accepts TAL as its substrate to perform a C-3 geranylgeranylation reaction, in which the pathway-dedicated GGPS cle6 is required to provide GGPP, the other substrate of cle5; the FAD-dependent monooxygenase Cle3 that forms an (S)-epoxide ring at the terminal olefin of the geranylgeranyl group; and the terpene cyclase Cle7 that catalyzes the cyclization of the prenyl group that yields the pentacyclic pathway intermediate chevalone E. Chevalone E can derivatize into seven new oxidized analogs by the cytochrome P450 monooxygenases cle2 (acting at C-20) and cle4 (acting at C-11 and C-12). In Aspergillus versicolor, this protein is Geranylgeranyl pyrophosphate synthase cle6.